A 185-amino-acid polypeptide reads, in one-letter code: Elongation factor P (185 aa).

Belongs to the elongation factor P family.

Its subcellular location is the cytoplasm. Its pathway is protein biosynthesis; polypeptide chain elongation. Its function is as follows. Involved in peptide bond synthesis. Stimulates efficient translation and peptide-bond synthesis on native or reconstituted 70S ribosomes in vitro. Probably functions indirectly by altering the affinity of the ribosome for aminoacyl-tRNA, thus increasing their reactivity as acceptors for peptidyl transferase. The protein is Elongation factor P of Clostridium novyi (strain NT).